The chain runs to 68 residues: Large ribosomal subunit protein bL31 (68 aa).

Zn(2+)-binding residues include Cys-16, Cys-18, Cys-36, and Cys-39.

It belongs to the bacterial ribosomal protein bL31 family. Type A subfamily. In terms of assembly, part of the 50S ribosomal subunit. The cofactor is Zn(2+).

Binds the 23S rRNA. The chain is Large ribosomal subunit protein bL31 from Dictyoglomus turgidum (strain DSM 6724 / Z-1310).